The primary structure comprises 147 residues: Myoglobin (147 aa).

The 140-residue stretch at 2–141 folds into the Globin domain; sequence ADFDMVLKCW…IIADMEADYK (140 aa). Histidine 60 provides a ligand contact to nitrite. Histidine 60 is a binding site for O2. Histidine 89 is a binding site for heme b.

Belongs to the globin family. As to quaternary structure, monomeric.

The protein localises to the cytoplasm. It localises to the sarcoplasm. The enzyme catalyses Fe(III)-heme b-[protein] + nitric oxide + H2O = Fe(II)-heme b-[protein] + nitrite + 2 H(+). The catalysed reaction is H2O2 + AH2 = A + 2 H2O. Functionally, monomeric heme protein which primary function is to store oxygen and facilitate its diffusion within muscle tissues. Reversibly binds oxygen through a pentacoordinated heme iron and enables its timely and efficient release as needed during periods of heightened demand. Depending on the oxidative conditions of tissues and cells, and in addition to its ability to bind oxygen, it also has a nitrite reductase activity whereby it regulates the production of bioactive nitric oxide. Under stress conditions, like hypoxia and anoxia, it also protects cells against reactive oxygen species thanks to its pseudoperoxidase activity. The protein is Myoglobin (mb) of Pseudochaenichthys georgianus (South Georgia icefish).